The sequence spans 75 residues: Protein RegB (75 aa).

Required for optimal exotoxin A production. This is Protein RegB (regB) from Pseudomonas aeruginosa (strain ATCC 15692 / DSM 22644 / CIP 104116 / JCM 14847 / LMG 12228 / 1C / PRS 101 / PAO1).